Reading from the N-terminus, the 204-residue chain is MRG/MORF4L-binding protein (204 aa).

The span at 1–15 shows a compositional bias: gly residues; the sequence is MGEAEVGGTGAPGDK. The interval 1-27 is disordered; the sequence is MGEAEVGGTGAPGDKGPGEAAPSPAEE. Gly2 bears the N-acetylglycine mark. Position 23 is a phosphoserine (Ser23). A Glycyl lysine isopeptide (Lys-Gly) (interchain with G-Cter in SUMO2) cross-link involves residue Lys127. 2 stretches are compositionally biased toward basic and acidic residues: residues 128-140 and 153-175; these read EEMK…HSGA and ALEK…EGAD. Positions 128–204 are disordered; the sequence is EEMKEDVDPH…SPSAAKRRRT (77 aa). Low complexity predominate over residues 189–198; that stretch reads ANSNPSSPSA. A phosphoserine mark is found at Ser191 and Ser195.

It belongs to the EAF7 family. In terms of assembly, component of the NuA4 histone acetyltransferase complex which contains the catalytic subunit KAT5/TIP60 and the subunits EP400, TRRAP/PAF400, BRD8/SMAP, EPC1, DMAP1/DNMAP1, RUVBL1/TIP49, RUVBL2, ING3, actin, ACTL6A/BAF53A, MORF4L1/MRG15, MORF4L2/MRGX, MRGBP, YEATS4/GAS41, VPS72/YL1 and MEAF6. MRGBP may interact directly with MORF4L1/MRG15 and MORF4L2/MRGX.

The protein localises to the nucleus. In terms of biological role, component of the NuA4 histone acetyltransferase (HAT) complex which is involved in transcriptional activation of select genes principally by acetylation of nucleosomal histones H4 and H2A. This modification may both alter nucleosome - DNA interactions and promote interaction of the modified histones with other proteins which positively regulate transcription. This complex may be required for the activation of transcriptional programs associated with oncogene and proto-oncogene mediated growth induction, tumor suppressor mediated growth arrest and replicative senescence, apoptosis, and DNA repair. NuA4 may also play a direct role in DNA repair when recruited to sites of DNA damage. The protein is MRG/MORF4L-binding protein (Mrgbp) of Mus musculus (Mouse).